Consider the following 349-residue polypeptide: Protein RecA (349 aa).

ATP is bound at residue G69 to T76.

It belongs to the RecA family.

The protein resides in the cytoplasm. Its function is as follows. Can catalyze the hydrolysis of ATP in the presence of single-stranded DNA, the ATP-dependent uptake of single-stranded DNA by duplex DNA, and the ATP-dependent hybridization of homologous single-stranded DNAs. It interacts with LexA causing its activation and leading to its autocatalytic cleavage. The chain is Protein RecA from Crocosphaera subtropica (strain ATCC 51142 / BH68) (Cyanothece sp. (strain ATCC 51142)).